We begin with the raw amino-acid sequence, 127 residues long: Ribosome-binding factor A (127 aa).

It belongs to the RbfA family. Monomer. Binds 30S ribosomal subunits, but not 50S ribosomal subunits or 70S ribosomes.

It localises to the cytoplasm. Its function is as follows. One of several proteins that assist in the late maturation steps of the functional core of the 30S ribosomal subunit. Associates with free 30S ribosomal subunits (but not with 30S subunits that are part of 70S ribosomes or polysomes). Required for efficient processing of 16S rRNA. May interact with the 5'-terminal helix region of 16S rRNA. This Chloroflexus aurantiacus (strain ATCC 29366 / DSM 635 / J-10-fl) protein is Ribosome-binding factor A.